The primary structure comprises 332 residues: Glycerol-3-phosphate dehydrogenase [NAD(P)+] (332 aa).

Positions 11, 12, 32, 33, and 106 each coordinate NADPH. Sn-glycerol 3-phosphate-binding residues include Lys106 and Gly136. NADPH is bound at residue Ala140. Sn-glycerol 3-phosphate is bound by residues Lys191, Asp244, Ser254, Arg255, and Asn256. Lys191 (proton acceptor) is an active-site residue. NADPH is bound at residue Arg255. The NADPH site is built by Val280 and Glu282.

It belongs to the NAD-dependent glycerol-3-phosphate dehydrogenase family.

It is found in the cytoplasm. The enzyme catalyses sn-glycerol 3-phosphate + NAD(+) = dihydroxyacetone phosphate + NADH + H(+). It carries out the reaction sn-glycerol 3-phosphate + NADP(+) = dihydroxyacetone phosphate + NADPH + H(+). It participates in membrane lipid metabolism; glycerophospholipid metabolism. In terms of biological role, catalyzes the reduction of the glycolytic intermediate dihydroxyacetone phosphate (DHAP) to sn-glycerol 3-phosphate (G3P), the key precursor for phospholipid synthesis. This chain is Glycerol-3-phosphate dehydrogenase [NAD(P)+], found in Corynebacterium kroppenstedtii (strain DSM 44385 / JCM 11950 / CIP 105744 / CCUG 35717).